Consider the following 59-residue polypeptide: U-limacoditoxin(3)-Dv33 (59 aa).

The signal sequence occupies residues 1–19 (MSKVILLCLIFALFACSIS).

This sequence belongs to the limacoditoxin-3 family. In terms of processing, the natural peptide is not amidated. The recombinant peptide is amidated. In terms of tissue distribution, expressed by the venom secretory cell of the spine. The spine is a cuticular structure containing a single large nucleated venom-secreting cell at its base. It is an independent unit capable of producing, storing and injecting venom. On the back of D.vulnerans caterpillars, spines are grouped together by 50 to 100 to form scoli, of which there are eight in D.vulnerans.

It localises to the secreted. Probable toxin. Shows a relatively potent antiparasitic activity against the major pathogenic nematode of ruminants (H.contortus, EC(50)=2.6 uM). Does not show insecticidal and antimicrobial activities. Does not induce increase in intracellular calcium in mouse DRG neurons, suggesting that it does not induce pain. The sequence is that of U-limacoditoxin(3)-Dv33 from Doratifera vulnerans (Mottled cup moth).